Here is a 232-residue protein sequence, read N- to C-terminus: 7-cyano-7-deazaguanine synthase (232 aa).

8–18 serves as a coordination point for ATP; sequence FSGGQDSTTCL. Positions 188, 197, 200, and 203 each coordinate Zn(2+).

This sequence belongs to the QueC family. Requires Zn(2+) as cofactor.

It catalyses the reaction 7-carboxy-7-deazaguanine + NH4(+) + ATP = 7-cyano-7-deazaguanine + ADP + phosphate + H2O + H(+). It functions in the pathway purine metabolism; 7-cyano-7-deazaguanine biosynthesis. Functionally, catalyzes the ATP-dependent conversion of 7-carboxy-7-deazaguanine (CDG) to 7-cyano-7-deazaguanine (preQ(0)). The protein is 7-cyano-7-deazaguanine synthase of Buchnera aphidicola subsp. Schizaphis graminum (strain Sg).